The primary structure comprises 1829 residues: Protein TIC 214 (1829 aa).

Helical transmembrane passes span 18-38, 67-87, 90-110, 127-147, 174-194, and 224-244; these read IINSVVVVGLYYGFMTTFSIG, FIAGQLMMFISIYYAPLHLAL, PHTITVLALPYLLFHFFWNNP, LSIQCVFLNNLIFQLFNHFLL, FVGWLIGHILFMKWVGLVLVW, and IFSILLFITCIYYLGRIPSPI. Positions 260–272 are enriched in basic and acidic residues; the sequence is RDVEIEKTFERGG. Residues 260–301 form a disordered region; sequence RDVEIEKTFERGGTKQGQEVSAEEDPSPSLFSEEKEDPDKIE.

It belongs to the TIC214 family. Part of the Tic complex.

The protein localises to the plastid. Its subcellular location is the chloroplast inner membrane. Involved in protein precursor import into chloroplasts. May be part of an intermediate translocation complex acting as a protein-conducting channel at the inner envelope. The protein is Protein TIC 214 of Citrus sinensis (Sweet orange).